The chain runs to 206 residues: 2,3-bisphosphoglycerate-dependent phosphoglycerate mutase (206 aa).

Substrate-binding positions include 9 to 16, 22 to 23, Arg61, 88 to 91, Lys99, 115 to 116, and 159 to 160; these read RHGQSEWN, TG, ERNY, RR, and GN. Catalysis depends on His10, which acts as the Tele-phosphohistidine intermediate. Residue Glu88 is the Proton donor/acceptor of the active site.

Belongs to the phosphoglycerate mutase family. BPG-dependent PGAM subfamily. As to quaternary structure, homodimer.

The enzyme catalyses (2R)-2-phosphoglycerate = (2R)-3-phosphoglycerate. It functions in the pathway carbohydrate degradation; glycolysis; pyruvate from D-glyceraldehyde 3-phosphate: step 3/5. Functionally, catalyzes the interconversion of 2-phosphoglycerate and 3-phosphoglycerate. This chain is 2,3-bisphosphoglycerate-dependent phosphoglycerate mutase, found in Bartonella tribocorum (strain CIP 105476 / IBS 506).